The sequence spans 327 residues: Eukaryotic translation initiation factor 3 subunit I (327 aa).

5 WD repeats span residues 8–49 (GHER…GSYD), 51–89 (HNGA…CIYT), 188–227 (VHRY…KLKQ), 229–268 (KSER…GHFE), and 285–324 (GHFG…LGFT).

Belongs to the eIF-3 subunit I family. In terms of assembly, component of the eukaryotic translation initiation factor 3 (eIF-3) complex.

Its subcellular location is the cytoplasm. Its function is as follows. Component of the eukaryotic translation initiation factor 3 (eIF-3) complex, which is involved in protein synthesis of a specialized repertoire of mRNAs and, together with other initiation factors, stimulates binding of mRNA and methionyl-tRNAi to the 40S ribosome. The eIF-3 complex specifically targets and initiates translation of a subset of mRNAs involved in cell proliferation. This is Eukaryotic translation initiation factor 3 subunit I from Caenorhabditis briggsae.